The sequence spans 335 residues: Mesoderm-specific transcript homolog protein (335 aa).

The next 3 helical transmembrane spans lie at 13–33, 88–108, and 266–286; these read WWVQ…HIPP, IWEG…LGFG, and VGAL…LDPV. The region spanning 71-310 is the AB hydrolase-1 domain; sequence IVVLLHGFPT…PRSTVSILDD (240 aa). The short motif at 98–103 is the RVIALD element; it reads RVIALD.

This sequence belongs to the AB hydrolase superfamily. In terms of tissue distribution, no detectable transcripts during preimplantation development. Isoform 1 was not detected in either in vitro-matured oocytes (IVF) or parthenogenetically activated (PA) blastocyst. Isoform 2 was expressed in IVF and PA blastocysts.

It is found in the endoplasmic reticulum membrane. In Bos taurus (Bovine), this protein is Mesoderm-specific transcript homolog protein (MEST).